A 340-amino-acid polypeptide reads, in one-letter code: Geranylgeranyl pyrophosphate synthase atmG (340 aa).

The segment covering 19–48 (NLDASYPTSSSLSTEPIDTRSSSPQGSAST) has biased composition (polar residues). The disordered stretch occupies residues 19-51 (NLDASYPTSSSLSTEPIDTRSSSPQGSASTPVD). Isopentenyl diphosphate is bound by residues Lys-69, Arg-72, and His-101. Residues Asp-108 and Asp-112 each coordinate Mg(2+). Arg-117 contacts dimethylallyl diphosphate. Arg-118 serves as a coordination point for isopentenyl diphosphate. Dimethylallyl diphosphate is bound by residues Lys-195, Thr-196, and Gln-229. Residue Asp-232 participates in Mg(2+) binding. Dimethylallyl diphosphate contacts are provided by Asn-236, Lys-246, and Lys-256.

It belongs to the FPP/GGPP synthase family. Mg(2+) is required as a cofactor.

The catalysed reaction is isopentenyl diphosphate + dimethylallyl diphosphate = (2E)-geranyl diphosphate + diphosphate. It carries out the reaction isopentenyl diphosphate + (2E)-geranyl diphosphate = (2E,6E)-farnesyl diphosphate + diphosphate. It catalyses the reaction isopentenyl diphosphate + (2E,6E)-farnesyl diphosphate = (2E,6E,10E)-geranylgeranyl diphosphate + diphosphate. Its function is as follows. Geranylgeranyl pyrophosphate synthase; part of the ATM1 gene cluster that mediates the biosynthesis of aflatrem, a tremorgenic mycotoxin with acute neurotoxic effects. Synthesis of geranylgeranyl diphosphate (GGPP) by AtmG (a GGPP synthase) precedes condensation of GGPP with indole 3-glycerol phosphate, followed by epoxidation and cyclization by AtmM (a FAD-dependent monooxygenase) and AtmC (a prenyltransferase) to produce paspaline. AtmB is also essential for paspaline production, but its exact role has not been identified yet. AtmP, a cytochrome P450 monooxygenase, subsequently converts paspaline to 13-desoxypaxilline via PC-M6 by removal of the C-30 methyl group and oxidation at C-10. AtmQ, a cytochrome P450 monooxygenase, then catalyzes the oxidation of 13-desoxypaxilline, first at C-7 to produce paspalicine and then at C-13 to form paspalinine. Finally, AtmD prenylates paspalinine to form aflatrem. The protein is Geranylgeranyl pyrophosphate synthase atmG of Aspergillus flavus.